The sequence spans 511 residues: Light-independent protochlorophyllide reductase subunit B (511 aa).

[4Fe-4S] cluster is bound at residue D36. D299 acts as the Proton donor in catalysis. 434–435 provides a ligand contact to substrate; the sequence is GM.

Belongs to the ChlB/BchB/BchZ family. In terms of assembly, protochlorophyllide reductase is composed of three subunits; ChlL, ChlN and ChlB. Forms a heterotetramer of two ChlB and two ChlN subunits. Requires [4Fe-4S] cluster as cofactor.

The protein localises to the plastid. It localises to the chloroplast. The enzyme catalyses chlorophyllide a + oxidized 2[4Fe-4S]-[ferredoxin] + 2 ADP + 2 phosphate = protochlorophyllide a + reduced 2[4Fe-4S]-[ferredoxin] + 2 ATP + 2 H2O. The protein operates within porphyrin-containing compound metabolism; chlorophyll biosynthesis (light-independent). Functionally, component of the dark-operative protochlorophyllide reductase (DPOR) that uses Mg-ATP and reduced ferredoxin to reduce ring D of protochlorophyllide (Pchlide) to form chlorophyllide a (Chlide). This reaction is light-independent. The NB-protein (ChlN-ChlB) is the catalytic component of the complex. This is Light-independent protochlorophyllide reductase subunit B from Huperzia lucidula (Shining clubmoss).